The chain runs to 315 residues: tRNA dimethylallyltransferase (315 aa).

13–20 (GPTAVGKT) is a binding site for ATP. 15–20 (TAVGKT) lines the substrate pocket. An interaction with substrate tRNA region spans residues 38 to 41 (DSRL).

It belongs to the IPP transferase family. Monomer. Requires Mg(2+) as cofactor.

The enzyme catalyses adenosine(37) in tRNA + dimethylallyl diphosphate = N(6)-dimethylallyladenosine(37) in tRNA + diphosphate. In terms of biological role, catalyzes the transfer of a dimethylallyl group onto the adenine at position 37 in tRNAs that read codons beginning with uridine, leading to the formation of N6-(dimethylallyl)adenosine (i(6)A). The polypeptide is tRNA dimethylallyltransferase (Herpetosiphon aurantiacus (strain ATCC 23779 / DSM 785 / 114-95)).